The sequence spans 190 residues: Xanthine phosphoribosyltransferase (190 aa).

Residues Leu-20 and Asn-27 each contribute to the xanthine site. 5-phospho-alpha-D-ribose 1-diphosphate is bound at residue 128 to 132 (ANGHA). Lys-156 is a xanthine binding site.

This sequence belongs to the purine/pyrimidine phosphoribosyltransferase family. Xpt subfamily. In terms of assembly, homodimer.

The protein resides in the cytoplasm. It carries out the reaction XMP + diphosphate = xanthine + 5-phospho-alpha-D-ribose 1-diphosphate. It participates in purine metabolism; XMP biosynthesis via salvage pathway; XMP from xanthine: step 1/1. Converts the preformed base xanthine, a product of nucleic acid breakdown, to xanthosine 5'-monophosphate (XMP), so it can be reused for RNA or DNA synthesis. This Pseudomonas aeruginosa (strain LESB58) protein is Xanthine phosphoribosyltransferase.